The primary structure comprises 665 residues: Pre-mRNA-processing factor 39 (665 aa).

The span at Met-1–Asn-11 shows a compositional bias: basic and acidic residues. The disordered stretch occupies residues Met-1 to His-28. Residues Ser-12–Glu-22 show a composition bias toward polar residues. Phosphoserine is present on Ser-44. HAT repeat units lie at residues Asn-107 to Arg-139, Asp-141 to Glu-173, Glu-181 to Glu-216, Gly-218 to Asn-251, Phe-331 to Glu-363, Gly-365 to Asn-397, and Gly-402 to Asn-434. The segment covering Gln-599–Asp-622 has biased composition (basic and acidic residues). A disordered region spans residues Gln-599–Ser-625.

It belongs to the PRP39 family.

The protein localises to the nucleus. In terms of biological role, involved in pre-mRNA splicing. This Mus musculus (Mouse) protein is Pre-mRNA-processing factor 39 (Prpf39).